Reading from the N-terminus, the 451-residue chain is UPF0210 protein NMB1652 (451 aa).

Belongs to the UPF0210 family. As to quaternary structure, homodimer.

In Neisseria meningitidis serogroup B (strain ATCC BAA-335 / MC58), this protein is UPF0210 protein NMB1652.